The following is a 235-amino-acid chain: Phosphoribosylformylglycinamidine synthase subunit PurQ (235 aa).

The region spanning 3-234 is the Glutamine amidotransferase type-1 domain; it reads FGVLVFPGSN…LNSLMAQGVT (232 aa). The Nucleophile role is filled by Cys86. Active-site residues include His203 and Glu205.

As to quaternary structure, part of the FGAM synthase complex composed of 1 PurL, 1 PurQ and 2 PurS subunits.

It localises to the cytoplasm. It catalyses the reaction N(2)-formyl-N(1)-(5-phospho-beta-D-ribosyl)glycinamide + L-glutamine + ATP + H2O = 2-formamido-N(1)-(5-O-phospho-beta-D-ribosyl)acetamidine + L-glutamate + ADP + phosphate + H(+). The catalysed reaction is L-glutamine + H2O = L-glutamate + NH4(+). It participates in purine metabolism; IMP biosynthesis via de novo pathway; 5-amino-1-(5-phospho-D-ribosyl)imidazole from N(2)-formyl-N(1)-(5-phospho-D-ribosyl)glycinamide: step 1/2. Its function is as follows. Part of the phosphoribosylformylglycinamidine synthase complex involved in the purines biosynthetic pathway. Catalyzes the ATP-dependent conversion of formylglycinamide ribonucleotide (FGAR) and glutamine to yield formylglycinamidine ribonucleotide (FGAM) and glutamate. The FGAM synthase complex is composed of three subunits. PurQ produces an ammonia molecule by converting glutamine to glutamate. PurL transfers the ammonia molecule to FGAR to form FGAM in an ATP-dependent manner. PurS interacts with PurQ and PurL and is thought to assist in the transfer of the ammonia molecule from PurQ to PurL. The polypeptide is Phosphoribosylformylglycinamidine synthase subunit PurQ (Acaryochloris marina (strain MBIC 11017)).